A 607-amino-acid polypeptide reads, in one-letter code: Dolichyl-diphosphooligosaccharide--protein glycosyltransferase subunit 1 (607 aa).

The signal sequence occupies residues 1-23; it reads MEAPAARLFLLLLLGTWAPAPGS. The Lumenal portion of the chain corresponds to 24–434; it reads ASSEAPPLIN…VVHYTFNKVL (411 aa). Lys187 is subject to N6-acetyllysine. The N-linked (GlcNAc...) asparagine glycan is linked to Asn299. The helical transmembrane segment at 435-455 threads the bilayer; it reads MLQEPLLVVAAFYILFFTVII. Residues 456–607 are Cytoplasmic-facing; sequence YVRLDFSITK…TKIDHILDAL (152 aa). Residue Lys538 is modified to N6-acetyllysine; alternate. A Glycyl lysine isopeptide (Lys-Gly) (interchain with G-Cter in SUMO2); alternate cross-link involves residue Lys538.

Belongs to the OST1 family. In terms of assembly, component of the oligosaccharyltransferase (OST) complex. OST exists in two different complex forms which contain common core subunits RPN1, RPN2, OST48, OST4, DAD1 and TMEM258, either STT3A or STT3B as catalytic subunits, and form-specific accessory subunits. STT3A complex assembly occurs through the formation of 3 subcomplexes. Subcomplex 1 contains RPN1 and TMEM258, subcomplex 2 contains the STT3A-specific subunits STT3A, DC2/OSTC, and KCP2 as well as the core subunit OST4, and subcomplex 3 contains RPN2, DAD1, and OST48. The STT3A complex can form stable complexes with the Sec61 complex or with both the Sec61 and TRAP complexes. Interacts with TMEM35A/NACHO. In terms of processing, ubiquitinated by the ECS(ASB11) complex. Ufmylated by UFL1 in response to endoplasmic reticulum stress, promoting reticulophagy of endoplasmic reticulum sheets.

Its subcellular location is the endoplasmic reticulum membrane. Its pathway is protein modification; protein glycosylation. In terms of biological role, subunit of the oligosaccharyl transferase (OST) complex that catalyzes the initial transfer of a defined glycan (Glc(3)Man(9)GlcNAc(2) in eukaryotes) from the lipid carrier dolichol-pyrophosphate to an asparagine residue within an Asn-X-Ser/Thr consensus motif in nascent polypeptide chains, the first step in protein N-glycosylation. N-glycosylation occurs cotranslationally and the complex associates with the Sec61 complex at the channel-forming translocon complex that mediates protein translocation across the endoplasmic reticulum (ER). All subunits are required for a maximal enzyme activity. The protein is Dolichyl-diphosphooligosaccharide--protein glycosyltransferase subunit 1 of Pongo abelii (Sumatran orangutan).